A 471-amino-acid chain; its full sequence is Glutamate--tRNA ligase 1 (471 aa).

A 'HIGH' region motif is present at residues 15–25 (PSPTGYLHIGG). A 'KMSKS' region motif is present at residues 243 to 247 (KLSKR). An ATP-binding site is contributed by Lys-246.

It belongs to the class-I aminoacyl-tRNA synthetase family. Glutamate--tRNA ligase type 1 subfamily. As to quaternary structure, monomer.

The protein resides in the cytoplasm. The enzyme catalyses tRNA(Glu) + L-glutamate + ATP = L-glutamyl-tRNA(Glu) + AMP + diphosphate. Catalyzes the attachment of glutamate to tRNA(Glu) in a two-step reaction: glutamate is first activated by ATP to form Glu-AMP and then transferred to the acceptor end of tRNA(Glu). The polypeptide is Glutamate--tRNA ligase 1 (Cereibacter sphaeroides (strain ATCC 17029 / ATH 2.4.9) (Rhodobacter sphaeroides)).